A 476-amino-acid polypeptide reads, in one-letter code: Inner membrane transporter YcaM (476 aa).

Topologically, residues 1–9 are cytoplasmic; that stretch reads MAGNVQEKQ. A helical membrane pass occupies residues 10-30; that stretch reads LRWYNIALMSFITVWGFGNVV. Residues 31 to 38 are Periplasmic-facing; the sequence is NNYANQGL. A helical transmembrane segment spans residues 39 to 59; it reads VVVFSWVFIFALYFTPYALIV. Residues 60 to 80 are Cytoplasmic-facing; the sequence is GQLGSTFKDGKGGVSTWIKHT. A helical membrane pass occupies residues 81–101; the sequence is MGPGLAYLAAWTYWVVHIPYL. Residues 102–125 are Periplasmic-facing; sequence AQKPQAILIALGWAMKGDGSLIKE. A helical membrane pass occupies residues 126–146; it reads YSVVALQGLTLVLFIFFMWVA. The Cytoplasmic segment spans residues 147 to 154; it reads SRGMKSLK. A helical membrane pass occupies residues 155 to 175; that stretch reads IVGSVAGIAMFVMSLLYVAMA. Residues 176–195 lie on the Periplasmic side of the membrane; sequence VTAPAITEVHIATTNITWET. Residues 196–216 traverse the membrane as a helical segment; sequence FIPHIDFTYITTISMLVFAVG. Residues 217-240 lie on the Cytoplasmic side of the membrane; it reads GAEKISPYVNQTRNPGKEFPKGML. A helical transmembrane segment spans residues 241–261; sequence CLAVMVAVCAILGSLAMGMMF. Residues 262 to 291 are Periplasmic-facing; the sequence is DSRNIPDDLMTNGQYYAFQKLGEYYNMGNT. The helical transmembrane segment at 292 to 312 threads the bilayer; the sequence is LMVIYAIANTLGQVAALVFSI. Residues 313 to 343 lie on the Cytoplasmic side of the membrane; that stretch reads DAPLKVLLGDADSKYIPASLCRTNASGTPVN. Residues 344–364 form a helical membrane-spanning segment; sequence GYFLTLVLVAILIMLPTLGIG. The Periplasmic segment spans residues 365-375; that stretch reads DMNNLYKWLLN. Residues 376-396 traverse the membrane as a helical segment; sequence LNSVVMPLRYLWVFVAFIAVV. Topologically, residues 397–414 are cytoplasmic; that stretch reads RLAQKYKPEYVFIRNKPL. Residues 415–435 form a helical membrane-spanning segment; sequence AMTVGIWCFAFTAFACLTGIF. Over 436–448 the chain is Periplasmic; the sequence is PKMEAFTAEWTFQ. Residues 449–469 form a helical membrane-spanning segment; it reads LALNVATPFVLVGLGLIFPLL. At 470–476 the chain is on the cytoplasmic side; it reads ARKANSK.

Belongs to the amino acid-polyamine-organocation (APC) superfamily.

Its subcellular location is the cell inner membrane. The polypeptide is Inner membrane transporter YcaM (ycaM) (Escherichia coli (strain K12)).